The following is a 294-amino-acid chain: MKQLTLAKTVKGVGIGLHKGEPIEITLEPLEANSGIVFFRSDLNASYKASPENVINTQMATVLGDERGFISTIEHLMSAINAYGIDNVRIVLNANEAPVMDGSSISFCMMLDEAGVKELDVPKKIMVIKKPIEVRDGNKFVRLTPTKEPRINYTIKFDNAVIGEQSYNFEFSKKNYIENIARARTFGFLKDVQALRSMNLALGGSLENTIVVDENRILNPEGLRFKDEFVRHKILDAIGDLTLLGYRVFGDYTSYAGSHHLNHLLTKEVLKDKDAYEIVSLEKTTQKAYEKVFA.

3 residues coordinate Zn(2+): H75, H232, and D236. H259 serves as the catalytic Proton donor.

Belongs to the LpxC family. The cofactor is Zn(2+).

It carries out the reaction a UDP-3-O-[(3R)-3-hydroxyacyl]-N-acetyl-alpha-D-glucosamine + H2O = a UDP-3-O-[(3R)-3-hydroxyacyl]-alpha-D-glucosamine + acetate. It participates in glycolipid biosynthesis; lipid IV(A) biosynthesis; lipid IV(A) from (3R)-3-hydroxytetradecanoyl-[acyl-carrier-protein] and UDP-N-acetyl-alpha-D-glucosamine: step 2/6. Functionally, catalyzes the hydrolysis of UDP-3-O-myristoyl-N-acetylglucosamine to form UDP-3-O-myristoylglucosamine and acetate, the committed step in lipid A biosynthesis. The protein is UDP-3-O-acyl-N-acetylglucosamine deacetylase of Campylobacter jejuni (strain RM1221).